Here is a 243-residue protein sequence, read N- to C-terminus: 3-deoxy-manno-octulosonate cytidylyltransferase (243 aa).

This sequence belongs to the KdsB family.

The protein resides in the cytoplasm. It catalyses the reaction 3-deoxy-alpha-D-manno-oct-2-ulosonate + CTP = CMP-3-deoxy-beta-D-manno-octulosonate + diphosphate. It functions in the pathway nucleotide-sugar biosynthesis; CMP-3-deoxy-D-manno-octulosonate biosynthesis; CMP-3-deoxy-D-manno-octulosonate from 3-deoxy-D-manno-octulosonate and CTP: step 1/1. Functionally, activates KDO (a required 8-carbon sugar) for incorporation into bacterial lipopolysaccharide in Gram-negative bacteria. This chain is 3-deoxy-manno-octulosonate cytidylyltransferase, found in Wigglesworthia glossinidia brevipalpis.